Consider the following 422-residue polypeptide: 5-hydroxytryptamine receptor 1A (422 aa).

At 1–38 (MDVLGPGQGNNTTSSEGPFGTRANATGISDVTFSYQVI) the chain is on the extracellular side. Asparagine 10, asparagine 11, and asparagine 24 each carry an N-linked (GlcNAc...) asparagine glycan. The chain crosses the membrane as a helical span at residues 39–59 (TSLLLGTLIFCAVLGNACVVA). Residues 60–73 (AIALERSLQNVANY) are Cytoplasmic-facing. Residues 74–98 (LIGSLAVTDLMVSVLVLPMAALYQV) form a helical membrane-spanning segment. Residues 99-107 (LNKWTLGQV) are Extracellular-facing. A helical membrane pass occupies residues 108–132 (TCDLFIALDVLCCTSSILHLCAIAL). Cysteine 109 and cysteine 187 are disulfide-bonded. Serotonin is bound by residues aspartate 116 and cysteine 120. The DRY motif; important for ligand-induced conformation changes motif lies at 133 to 135 (DRY). At 133-152 (DRYWAITDPIDYVNKRTPRR) the chain is on the cytoplasmic side. Residues 153 to 174 (AAALISLTWLVGFLISIPPMLG) traverse the membrane as a helical segment. At 175-193 (WRTPEDRSDPDACTISKDH) the chain is on the extracellular side. Residues 194-216 (GYTIYSTFGAFYIPLLLMLVLYG) traverse the membrane as a helical segment. The Cytoplasmic portion of the chain corresponds to 217–346 (RIFRAARFRI…LARERKTVKT (130 aa)). Residues 237–262 (GADSRLGASPAPQRKKSANGELGSRE) form a disordered region. 1D-myo-inositol 4-phosphate contacts are provided by lysine 345, threonine 346, and glycine 352. Residues 347 to 370 (LGIIMGTFILCWLPFFIVALVLPF) form a helical membrane-spanning segment. The Extracellular segment spans residues 371 to 378 (CESSCHMP). The chain crosses the membrane as a helical span at residues 379-403 (TLLGAIINWLGYSNSLLNPVIYAYF). The short motif at 396 to 400 (NPVIY) is the NPxxY motif; important for ligand-induced conformation changes and signaling element. Residues phenylalanine 403, asparagine 404, and lysine 405 each contribute to the 1D-myo-inositol 4-phosphate site. Residues 404 to 422 (NKDFQNAFKKILKCKFCRR) are Cytoplasmic-facing.

It belongs to the G-protein coupled receptor 1 family. 5-hydroxytryptamine receptor subfamily. HTR1A sub-subfamily. In terms of assembly, heterodimer; heterodimerizes with GPER1. Interacts with YIF1B. Interacts with GPR39 and GALR1.

It localises to the cell membrane. The protein resides in the cell projection. It is found in the dendrite. Its activity is regulated as follows. G-protein coupled receptor activity is regulated by lipids: phosphatidylinositol 4-phosphate increases HTR1A-mediated activity. G-protein coupled receptor for 5-hydroxytryptamine (serotonin). Also functions as a receptor for various drugs and psychoactive substances. Ligand binding causes a conformation change that triggers signaling via guanine nucleotide-binding proteins (G proteins) and modulates the activity of downstream effectors, such as adenylate cyclase. HTR1A is coupled to G(i)/G(o) G alpha proteins and mediates inhibitory neurotransmission: signaling inhibits adenylate cyclase activity and activates a phosphatidylinositol-calcium second messenger system that regulates the release of Ca(2+) ions from intracellular stores. Beta-arrestin family members regulate signaling by mediating both receptor desensitization and resensitization processes. This chain is 5-hydroxytryptamine receptor 1A (HTR1A), found in Equus caballus (Horse).